The following is a 516-amino-acid chain: Rho guanine nucleotide exchange factor 9 (516 aa).

Residues 8 to 67 (DSIVSAEAVWDHVTMANRELAFKAGDVIKVLDASNKDWWWGQIDDEEGWFPASFVRLWVN) enclose the SH3 domain. An interaction with GPHN region spans residues 100 to 110 (RDQMRANVINE). One can recognise a DH domain in the interval 103-287 (MRANVINEIM…RNVTQQINER (185 aa)). Positions 318 to 425 (ELIYTGEMAW…WLRAFREERK (108 aa)) constitute a PH domain. A disordered region spans residues 450–480 (RKASKQKGVNSARSVPPSYPPPQDPLNQGQY). A Phosphoserine modification is found at serine 502.

Interacts with GPHN. Detected in embryonic and adult brain.

The protein localises to the cytoplasm. Its subcellular location is the postsynaptic density. In terms of biological role, acts as a guanine nucleotide exchange factor (GEF) for CDC42. Promotes formation of GPHN clusters. The protein is Rho guanine nucleotide exchange factor 9 (Arhgef9) of Mus musculus (Mouse).